An 876-amino-acid polypeptide reads, in one-letter code: Alanine--tRNA ligase (876 aa).

An N6-acetyllysine modification is found at Lys74. Positions 564, 568, 666, and 670 each coordinate Zn(2+).

The protein belongs to the class-II aminoacyl-tRNA synthetase family. In terms of assembly, homotetramer. Zn(2+) is required as a cofactor.

The protein resides in the cytoplasm. It carries out the reaction tRNA(Ala) + L-alanine + ATP = L-alanyl-tRNA(Ala) + AMP + diphosphate. Its function is as follows. Catalyzes the attachment of alanine to tRNA(Ala) in a two-step reaction: alanine is first activated by ATP to form Ala-AMP and then transferred to the acceptor end of tRNA(Ala). Also edits incorrectly charged Ser-tRNA(Ala) and Gly-tRNA(Ala) via its editing domain. The polypeptide is Alanine--tRNA ligase (Escherichia coli O157:H7).